The following is a 571-amino-acid chain: Probable pectinesterase/pectinesterase inhibitor 58 (571 aa).

The N-terminal stretch at Met-1–Ala-28 is a signal peptide. Asn-36, Asn-91, Asn-207, and Asn-216 each carry an N-linked (GlcNAc...) asparagine glycan. A pectinesterase inhibitor 58 region spans residues Lys-49–Met-204. The tract at residues Asn-259–Asn-556 is pectinesterase 58. Thr-335 lines the substrate pocket. Asn-347 carries N-linked (GlcNAc...) asparagine glycosylation. Gln-365 is a binding site for substrate. Asp-388 (proton donor; for pectinesterase activity) is an active-site residue. Cys-402 and Cys-422 are joined by a disulfide. The active-site Nucleophile; for pectinesterase activity is the Asp-409. Residues Arg-477 and Trp-479 each coordinate substrate.

In the N-terminal section; belongs to the PMEI family. It in the C-terminal section; belongs to the pectinesterase family. In terms of tissue distribution, expressed in siliques, but not in flower buds.

The protein localises to the secreted. It is found in the cell wall. The catalysed reaction is [(1-&gt;4)-alpha-D-galacturonosyl methyl ester](n) + n H2O = [(1-&gt;4)-alpha-D-galacturonosyl](n) + n methanol + n H(+). It participates in glycan metabolism; pectin degradation; 2-dehydro-3-deoxy-D-gluconate from pectin: step 1/5. In terms of biological role, acts in the modification of cell walls via demethylesterification of cell wall pectin. This Arabidopsis thaliana (Mouse-ear cress) protein is Probable pectinesterase/pectinesterase inhibitor 58 (PME58).